The chain runs to 172 residues: Adenine phosphoribosyltransferase (172 aa).

Belongs to the purine/pyrimidine phosphoribosyltransferase family. As to quaternary structure, homodimer.

It is found in the cytoplasm. It carries out the reaction AMP + diphosphate = 5-phospho-alpha-D-ribose 1-diphosphate + adenine. Its pathway is purine metabolism; AMP biosynthesis via salvage pathway; AMP from adenine: step 1/1. Catalyzes a salvage reaction resulting in the formation of AMP, that is energically less costly than de novo synthesis. The chain is Adenine phosphoribosyltransferase from Streptococcus mutans serotype c (strain ATCC 700610 / UA159).